We begin with the raw amino-acid sequence, 154 residues long: Small ribosomal subunit protein uS15 (154 aa).

The segment covering 1–11 (MSRLHAHKRYH) has biased composition (basic residues). The tract at residues 1 to 24 (MSRLHAHKRYHGQSGSKRPLRTTK) is disordered.

The protein belongs to the universal ribosomal protein uS15 family. As to quaternary structure, part of the 30S ribosomal subunit.

This is Small ribosomal subunit protein uS15 from Nanoarchaeum equitans (strain Kin4-M).